A 317-amino-acid polypeptide reads, in one-letter code: Ribose-phosphate pyrophosphokinase (317 aa).

ATP-binding positions include 43–45 (DGE) and 102–103 (RQ). Residues histidine 136 and aspartate 175 each coordinate Mg(2+). Lysine 198 is a catalytic residue. Residues arginine 200, aspartate 224, and 228–232 (DTAGT) each bind D-ribose 5-phosphate.

This sequence belongs to the ribose-phosphate pyrophosphokinase family. Class I subfamily. Homohexamer. Mg(2+) serves as cofactor.

The protein resides in the cytoplasm. It catalyses the reaction D-ribose 5-phosphate + ATP = 5-phospho-alpha-D-ribose 1-diphosphate + AMP + H(+). Its pathway is metabolic intermediate biosynthesis; 5-phospho-alpha-D-ribose 1-diphosphate biosynthesis; 5-phospho-alpha-D-ribose 1-diphosphate from D-ribose 5-phosphate (route I): step 1/1. Functionally, involved in the biosynthesis of the central metabolite phospho-alpha-D-ribosyl-1-pyrophosphate (PRPP) via the transfer of pyrophosphoryl group from ATP to 1-hydroxyl of ribose-5-phosphate (Rib-5-P). The polypeptide is Ribose-phosphate pyrophosphokinase (Bacillus anthracis).